We begin with the raw amino-acid sequence, 279 residues long: Tryptophan synthase alpha chain (279 aa).

Residues Glu49 and Asp60 each act as proton acceptor in the active site.

This sequence belongs to the TrpA family. In terms of assembly, tetramer of two alpha and two beta chains.

The catalysed reaction is (1S,2R)-1-C-(indol-3-yl)glycerol 3-phosphate + L-serine = D-glyceraldehyde 3-phosphate + L-tryptophan + H2O. It functions in the pathway amino-acid biosynthesis; L-tryptophan biosynthesis; L-tryptophan from chorismate: step 5/5. Functionally, the alpha subunit is responsible for the aldol cleavage of indoleglycerol phosphate to indole and glyceraldehyde 3-phosphate. This chain is Tryptophan synthase alpha chain, found in Nitrosospira multiformis (strain ATCC 25196 / NCIMB 11849 / C 71).